The following is a 267-amino-acid chain: 2-keto-3-deoxy-L-rhamnonate aldolase (267 aa).

The Proton acceptor role is filled by H49. Q151 contacts substrate. E153 contacts Mg(2+). Substrate is bound by residues A178 and D179. D179 contributes to the Mg(2+) binding site.

Belongs to the HpcH/HpaI aldolase family. KDR aldolase subfamily. In terms of assembly, homohexamer. Mg(2+) is required as a cofactor.

The enzyme catalyses 2-dehydro-3-deoxy-L-rhamnonate = (S)-lactaldehyde + pyruvate. Its function is as follows. Catalyzes the reversible retro-aldol cleavage of 2-keto-3-deoxy-L-rhamnonate (KDR) to pyruvate and lactaldehyde. The chain is 2-keto-3-deoxy-L-rhamnonate aldolase from Salmonella gallinarum (strain 287/91 / NCTC 13346).